Here is a 22-residue protein sequence, read N- to C-terminus: Putative lactoylglutathione lyase (22 aa).

The segment at 1 to 22 is disordered; that stretch reads ITACLDPDGWKEPGPLPGISTK. The Proton donor/acceptor role is filled by glutamate 12.

It belongs to the glyoxalase I family. Zn(2+) serves as cofactor.

The enzyme catalyses (R)-S-lactoylglutathione = methylglyoxal + glutathione. The protein operates within secondary metabolite metabolism; methylglyoxal degradation; (R)-lactate from methylglyoxal: step 1/2. Its function is as follows. Catalyzes the conversion of hemimercaptal, formed from methylglyoxal and glutathione, to S-lactoylglutathione. This Pinus strobus (Eastern white pine) protein is Putative lactoylglutathione lyase.